A 457-amino-acid chain; its full sequence is MTLHCQKIGHGLPPILRSATADLLTKYGPLLFDWAARHGSPLNLVWPDALRENLAALKGVLTERRLEHAIYYGAKANKSPGLMQAALSAGAGLDVSSLYELRDARRLGADGARLVATGPAKTSAFHQELINCNALISVDSPEELEDLIHGLPADAGQQSILLRLRPRDQSKSRFGMPPDAVVHCLARLAGEGRVRFDGLHFHLSGYRRETRVAALREAADLIAEARRMGFFPGMIDIGGGLPIQYVDRARYKAHLAAQAPEDYRTGKIPDSFYPYGSTLSAADWLHRLLEAEMNQGRSVAGYLAREGLTLAMEPGRALADQAAITVFRISRVKALGPDSHVIFVEGSSFSACETWFASEFLIDPILVPATKATVQLPPVRAYLAGHSCLDEDVISNRWLTFPTAPRAGDLLVYANTGGYQMDLLENEFHRHPMPARFCVIEDAEGRPNLVPDTIGEV.

N6-(pyridoxal phosphate)lysine is present on K75.

Pyridoxal 5'-phosphate is required as a cofactor.

This is an uncharacterized protein from Sinorhizobium fredii (strain NBRC 101917 / NGR234).